A 384-amino-acid chain; its full sequence is MAKHLFTSESVSEGHPDKIADQISDAVLDAILQQDPKARVACETYVKTGMVLVGGEITTSAWVDIEEITRNTVREIGYVHSDMGFDANSCAVLSAIGKQSPDINQGVDRADPLEQGAGDQGLMFGYATNETDVLMPAPITYAHRLVQRQAEVRKNGTLPWLRPDAKSQVTFQYDDGKIVGIDAVVLSTQHAEDIDQKSLQEAVMEEIIKPILPSEWLNTSTKFFINPTGRFVIGGPMGDCGLTGRKIIVDTYGGMARHGGGAFSGKDPSKVDRSAAYAARYVAKNIVAAGLADRCEIQVSYAIGVAEPTSIMVETFGTEKVPVEQLILLVREFFDLRPYGLIQMLDLLHPIYKETAAYGHFGRENFPWEKTDKAQLLRDAAGLK.

H15 contacts ATP. D17 contacts Mg(2+). E43 serves as a coordination point for K(+). L-methionine is bound by residues E56 and Q99. The tract at residues 99–109 (QSPDINQGVDR) is flexible loop. Residues 164 to 166 (DAK), 230 to 231 (RF), D239, 245 to 246 (RK), A262, and K266 contribute to the ATP site. D239 serves as a coordination point for L-methionine. K270 is an L-methionine binding site.

It belongs to the AdoMet synthase family. Homotetramer; dimer of dimers. The cofactor is Mg(2+). K(+) serves as cofactor.

Its subcellular location is the cytoplasm. The enzyme catalyses L-methionine + ATP + H2O = S-adenosyl-L-methionine + phosphate + diphosphate. It functions in the pathway amino-acid biosynthesis; S-adenosyl-L-methionine biosynthesis; S-adenosyl-L-methionine from L-methionine: step 1/1. Functionally, catalyzes the formation of S-adenosylmethionine (AdoMet) from methionine and ATP. The overall synthetic reaction is composed of two sequential steps, AdoMet formation and the subsequent tripolyphosphate hydrolysis which occurs prior to release of AdoMet from the enzyme. The polypeptide is S-adenosylmethionine synthase (Salmonella heidelberg (strain SL476)).